The sequence spans 269 residues: Diaminopimelate epimerase (269 aa).

Substrate-binding residues include N15, Q49, and N66. Residue C75 is the Proton donor of the active site. Residues 76-77 (GN), N155, N187, and 204-205 (ER) each bind substrate. C213 functions as the Proton acceptor in the catalytic mechanism. 214 to 215 (GS) contacts substrate.

Belongs to the diaminopimelate epimerase family. As to quaternary structure, homodimer.

Its subcellular location is the cytoplasm. The catalysed reaction is (2S,6S)-2,6-diaminopimelate = meso-2,6-diaminopimelate. The protein operates within amino-acid biosynthesis; L-lysine biosynthesis via DAP pathway; DL-2,6-diaminopimelate from LL-2,6-diaminopimelate: step 1/1. In terms of biological role, catalyzes the stereoinversion of LL-2,6-diaminopimelate (L,L-DAP) to meso-diaminopimelate (meso-DAP), a precursor of L-lysine and an essential component of the bacterial peptidoglycan. This chain is Diaminopimelate epimerase, found in Rickettsia canadensis (strain McKiel).